A 211-amino-acid polypeptide reads, in one-letter code: SAGA-associated factor 11 homolog 2 (211 aa).

The SGF11-type zinc finger occupies 115 to 136 (CTCPNCDRLVAAARFAPHLEKC). The segment at 149 to 211 (RRLATKEGSS…GSKKNNGKTF (63 aa)) is disordered. Over residues 157–166 (SSASTSSTST) the composition is skewed to low complexity. S187 is modified (phosphoserine). Residues 197–211 (SSRNNGSKKNNGKTF) are compositionally biased toward low complexity.

The protein belongs to the SGF11 family. As to quaternary structure, component of some SAGA transcription coactivator-HAT complexes, at least composed of Ada2b, not/nonstop, Pcaf/Gcn5, Sgf11 and Spt3. Within the SAGA complex, Sgf11, e(y)2, and not/nonstop form an additional subcomplex of SAGA called the DUB module (deubiquitination module). Interacts directly with not/nonstop. Interacts with the AMEX complex component xmas-2. Interacts with Cbp80; important for promoter recruitment of Sgf11 that is not associated with the DUB module.

Its subcellular location is the nucleus. It is found in the nucleoplasm. The protein localises to the cytoplasm. In terms of biological role, component of the transcription regulatory histone acetylation (HAT) complex SAGA, a multiprotein complex that activates transcription by remodeling chromatin and mediating histone acetylation and deubiquitination. Within the SAGA complex, participates in a subcomplex that specifically deubiquitinates histone H2B. The SAGA complex is recruited to specific gene promoters by activators, where it is required for transcription. Required for nuclear receptor-mediated transactivation. Binds independently on SAGA to promoters in an RNA-dependent manner. Binds to mRNA and is essential for total mRNA export from the nucleus. Required to counteract heterochromatin silencing. Controls the development of neuronal connectivity in visual system by being required for accurate axon targeting in the optic lobe. Required for expression of ecdysone-induced genes such as br/broad. This Drosophila grimshawi (Hawaiian fruit fly) protein is SAGA-associated factor 11 homolog 2.